The following is a 91-amino-acid chain: Probable Fe(2+)-trafficking protein (91 aa).

The protein belongs to the Fe(2+)-trafficking protein family.

In terms of biological role, could be a mediator in iron transactions between iron acquisition and iron-requiring processes, such as synthesis and/or repair of Fe-S clusters in biosynthetic enzymes. The chain is Probable Fe(2+)-trafficking protein from Ralstonia pickettii (strain 12J).